The following is a 527-amino-acid chain: UDP-glucuronosyltransferase 2A3 (527 aa).

Residues 1 to 23 form the signal peptide; that stretch reads MRSEKSALVFLLLQLFCVGCGFC. Residues 24–486 are Extracellular-facing; sequence GKVLVWPCDM…AAHNLTWFQH (463 aa). A glycan (N-linked (GlcNAc...) asparagine) is linked at Asn-313. Residues 487–507 traverse the membrane as a helical segment; sequence YSIDVIGFLLACVATAIFLFT. Topologically, residues 508-523 are cytoplasmic; the sequence is KCCLFSCQKFNKTRKI.

Belongs to the UDP-glycosyltransferase family.

The protein localises to the membrane. The catalysed reaction is glucuronate acceptor + UDP-alpha-D-glucuronate = acceptor beta-D-glucuronoside + UDP + H(+). UDP-glucuronosyltransferases catalyze phase II biotransformation reactions in which lipophilic substrates are conjugated with glucuronic acid to increase water solubility and enhance excretion. They are of major importance in the conjugation and subsequent elimination of potentially toxic xenobiotics and endogenous compounds. The sequence is that of UDP-glucuronosyltransferase 2A3 (UGT2A3) from Pongo abelii (Sumatran orangutan).